The chain runs to 36 residues: Photosystem I reaction center subunit VIII (36 aa).

The helical transmembrane segment at 7-29 (PSILVPLVGILLPAVTMASLFLY) threads the bilayer.

Belongs to the PsaI family.

It localises to the plastid. Its subcellular location is the chloroplast thylakoid membrane. May help in the organization of the PsaL subunit. The polypeptide is Photosystem I reaction center subunit VIII (Adiantum capillus-veneris (Maidenhair fern)).